Reading from the N-terminus, the 529-residue chain is Protein FLOURY ENDOSPERM 6, chloroplastic (529 aa).

Disordered regions lie at residues 1–22 (MLPL…PTLT), 39–77 (AAPH…NAAR), and 166–275 (QGAV…HNKS). The N-terminal 71 residues, 1–71 (MLPLLLPLPV…QTRAPRRTLS (71 aa)), are a transit peptide targeting the chloroplast. Pro residues predominate over residues 9 to 18 (PVTPPPPLPS). Residues 41–57 (PHHHHHHRRRRVYRRQR) show a composition bias toward basic residues. The stretch at 400–452 (VMQAQEELRSIRAKIAVLEGKMALEIIEKNKIIEEKQRRLDEAEKALSELRTV) forms a coiled coil.

As to quaternary structure, interacts with SKIPA. Interacts with ISA1. In terms of tissue distribution, expressed in leaves, stems and panicles. Expressed at lower levels in roots and developing seeds.

The protein localises to the plastid. Its subcellular location is the chloroplast. In terms of biological role, involved in compound starch granule formation and starch synthesis in endosperm. May act as a regulatory scaffolding protein and affect starch synthesis and compound starch granule formation through direct interaction with isoamylase 1 (ISA1). Binds starch, amylopectin and amylose through its C-terminal carbohydrate-binding domain (CBM) in vitro. This chain is Protein FLOURY ENDOSPERM 6, chloroplastic, found in Oryza sativa subsp. japonica (Rice).